A 297-amino-acid polypeptide reads, in one-letter code: TATA-box-binding protein (297 aa).

A disordered region spans residues 52 to 116; it reads EEQQRQQQQA…ITPATPASES (65 aa). Composition is skewed to low complexity over residues 56–78 and 104–114; these read RQQQQAQQSTSQQGNQGSGQTPQ and MTPITPATPAS. 2 repeat units span residues 123-199 and 213-290.

The protein belongs to the TBP family. Belongs to the TFIID complex together with the TBP-associated factors (TAFs). Binds DNA as monomer. In terms of processing, the N-terminal domain is extensively phosphorylated.

It is found in the nucleus. Its function is as follows. General transcription factor that functions at the core of the DNA-binding multiprotein factor TFIID. Binding of TFIID to the TATA box is the initial transcriptional step of the pre-initiation complex (PIC), playing a role in the activation of eukaryotic genes transcribed by RNA polymerase II. Members of the TBP family are differentially required to regulate transcription and development during early embryogenesis. Binds to the promoters of select genes. In Xenopus tropicalis (Western clawed frog), this protein is TATA-box-binding protein.